A 514-amino-acid polypeptide reads, in one-letter code: Bifunctional purine biosynthesis protein PurH (514 aa).

Positions 1–146 (MARLALLSVS…KNFAHLAVLC (146 aa)) constitute an MGS-like domain.

The protein belongs to the PurH family.

The enzyme catalyses (6R)-10-formyltetrahydrofolate + 5-amino-1-(5-phospho-beta-D-ribosyl)imidazole-4-carboxamide = 5-formamido-1-(5-phospho-D-ribosyl)imidazole-4-carboxamide + (6S)-5,6,7,8-tetrahydrofolate. It carries out the reaction IMP + H2O = 5-formamido-1-(5-phospho-D-ribosyl)imidazole-4-carboxamide. Its pathway is purine metabolism; IMP biosynthesis via de novo pathway; 5-formamido-1-(5-phospho-D-ribosyl)imidazole-4-carboxamide from 5-amino-1-(5-phospho-D-ribosyl)imidazole-4-carboxamide (10-formyl THF route): step 1/1. It functions in the pathway purine metabolism; IMP biosynthesis via de novo pathway; IMP from 5-formamido-1-(5-phospho-D-ribosyl)imidazole-4-carboxamide: step 1/1. The polypeptide is Bifunctional purine biosynthesis protein PurH (Nostoc punctiforme (strain ATCC 29133 / PCC 73102)).